A 165-amino-acid chain; its full sequence is Deoxyuridine 5'-triphosphate nucleotidohydrolase (165 aa).

This sequence belongs to the dUTPase family. In terms of assembly, homotrimer. It depends on Mg(2+) as a cofactor.

It localises to the host cytoplasm. The protein resides in the virion. The catalysed reaction is dUTP + H2O = dUMP + diphosphate + H(+). The viral dUTPase may play a role in lowering the dUTP concentration in natural infections to minimize misincorporation of deoxyuridine into the viral DNA and ensure the fidelity of genome replication. The chain is Deoxyuridine 5'-triphosphate nucleotidohydrolase from Ornithodoros (relapsing fever ticks).